The chain runs to 776 residues: Transcription activator of gluconeogenesis HCAG_03671 (776 aa).

A disordered region spans residues 1–70; it reads MTASTQNGSP…NAKDPLRPRR (70 aa). Composition is skewed to polar residues over residues 21–41 and 50–60; these read NQES…QSPA and ENGQKHTSTAA. The segment at residues 77 to 105 is a DNA-binding region (zn(2)-C6 fungal-type); that stretch reads CFACQRAHLTCGDERPCQRCIKRGLQDAC. Disordered regions lie at residues 140 to 159, 179 to 248, 286 to 351, 556 to 593, and 651 to 726; these read RTNA…KDSR, TQAK…PFGA, GAGD…NIYN, NLNV…GGGG, and REAQ…SPKQ. Positions 142 to 155 are enriched in low complexity; the sequence is NASQQQNGPNSNSN. Residues 195–217 show a composition bias toward polar residues; that stretch reads MQDTSINPSAFQAPSPTSTPNFD. The span at 218–229 shows a compositional bias: low complexity; it reads LSSNPPNRNLSS. Composition is skewed to polar residues over residues 230 to 244, 292 to 322, 334 to 351, and 557 to 576; these read AMTQ…QTQD, PSDS…NTQP, WNPS…NIYN, and LNVN…TPRN. Positions 657-669 are enriched in gly residues; sequence GPDGKGGGGGGGD. A compositionally biased stretch (low complexity) spans 670 to 714; sequence VATTAATTSTSTSNGANSSGHANANRNNTNPNNSSPPSSSSAAAA.

This sequence belongs to the ERT1/acuK family.

It localises to the nucleus. Transcription factor which regulates nonfermentable carbon utilization. Activator of gluconeogenetic genes. This is Transcription activator of gluconeogenesis HCAG_03671 from Ajellomyces capsulatus (strain NAm1 / WU24) (Darling's disease fungus).